Reading from the N-terminus, the 232-residue chain is RNA chaperone ProQ (232 aa).

Residues 105–182 are disordered; that stretch reads EAKARVQAQR…REEQHTPVSD (78 aa). Residues 117–136 show a composition bias toward basic and acidic residues; the sequence is QQAKKREAAAAAGEKEDAPR. A compositionally biased stretch (basic residues) spans 137–146; it reads RERKPRPTTP. Basic and acidic residues predominate over residues 147–177; that stretch reads RRKEGAERKPRSQKPVEKAPKTVKAPREEQH.

This sequence belongs to the ProQ family.

Its subcellular location is the cytoplasm. Its function is as follows. RNA chaperone with significant RNA binding, RNA strand exchange and RNA duplexing activities. May regulate ProP activity through an RNA-based, post-transcriptional mechanism. This chain is RNA chaperone ProQ, found in Escherichia coli (strain UTI89 / UPEC).